Reading from the N-terminus, the 365-residue chain is MCSTKKPIKLDLCASVKLTPFKPMRPPKPMQCWIHPRRANCKVTRPRNNYSDPDNENDMLHMTVLNSVFLNEHAKLYYRHLLRNDQAEARKTILNADSVYECMLIRPIRTEHFRSVDEAGEHNMSVLKIIIDAVIKYIGKLADDEYILIADRMYVDLIYSEFRAIILPQSAYIIKGDYAESDSESGQSVDVCNELEYPWKLITANNCIVSTDESRQSQYIYRTFLLYNTVLTAILKQNNPFDVIAENTSISIIVRNLGSCPNNKDRVKCCDLNYGGVPPGHVMCPPREITKKFFHYAKWVRNPNKYKRYSELIARQSETGGGSASLRENVNNQLHARDVSQLHLLDWENFMGEFSSYFGLHAHNV.

Interacts with C42 and VP80. Interacts with protein 38K.

Its subcellular location is the virion. Functionally, structural protein that participates in nucleocapsid assembly. Plays an essential role in the proper localization of the major capsid protein VP39, and the minor capsid protein 38K into the capsid assembly site. The protein is Protein AC54 (AC54) of Lepidoptera (butterflies and moths).